A 146-amino-acid chain; its full sequence is Large ribosomal subunit protein uL15 (146 aa).

Residues 1–46 (MAIELHDLKPAPGAHKAKTRVGRGEGSKGKTAGRGTKGTGARKNVP) are disordered. Over residues 29–43 (GKTAGRGTKGTGARK) the composition is skewed to low complexity.

Belongs to the universal ribosomal protein uL15 family. In terms of assembly, part of the 50S ribosomal subunit.

Functionally, binds to the 23S rRNA. The polypeptide is Large ribosomal subunit protein uL15 (Cutibacterium acnes (strain DSM 16379 / KPA171202) (Propionibacterium acnes)).